Here is a 344-residue protein sequence, read N- to C-terminus: Protein RecA (344 aa).

65 to 72 (GPESSGKT) contacts ATP.

This sequence belongs to the RecA family.

It is found in the cytoplasm. In terms of biological role, can catalyze the hydrolysis of ATP in the presence of single-stranded DNA, the ATP-dependent uptake of single-stranded DNA by duplex DNA, and the ATP-dependent hybridization of homologous single-stranded DNAs. It interacts with LexA causing its activation and leading to its autocatalytic cleavage. The chain is Protein RecA from Rubrobacter xylanophilus (strain DSM 9941 / JCM 11954 / NBRC 16129 / PRD-1).